The primary structure comprises 147 residues: Lysozyme C (147 aa).

Positions 1-18 (MKALVILGFLFLSVAVQG) are cleaved as a signal peptide. The 129-residue stretch at 19–147 (KVFERCELAR…VSSYVEGCTL (129 aa)) folds into the C-type lysozyme domain. 4 cysteine pairs are disulfide-bonded: Cys24/Cys145, Cys48/Cys133, Cys83/Cys99, and Cys95/Cys113. Catalysis depends on residues Glu53 and Asp71.

This sequence belongs to the glycosyl hydrolase 22 family. As to quaternary structure, monomer. In terms of tissue distribution, stomach-specific.

The catalysed reaction is Hydrolysis of (1-&gt;4)-beta-linkages between N-acetylmuramic acid and N-acetyl-D-glucosamine residues in a peptidoglycan and between N-acetyl-D-glucosamine residues in chitodextrins.. In terms of biological role, lysozymes have primarily a bacteriolytic function; those in tissues and body fluids are associated with the monocyte-macrophage system and enhance the activity of immunoagents. This is Lysozyme C (LYZ1) from Bos taurus (Bovine).